A 65-amino-acid chain; its full sequence is UPF0337 protein PA4738 (65 aa).

The protein belongs to the UPF0337 (CsbD) family.

The chain is UPF0337 protein PA4738 from Pseudomonas aeruginosa (strain ATCC 15692 / DSM 22644 / CIP 104116 / JCM 14847 / LMG 12228 / 1C / PRS 101 / PAO1).